The sequence spans 776 residues: Methionine--tRNA ligase (776 aa).

Positions 10–20 (PYSNGPIHLGH) match the 'HIGH' region motif. 4 residues coordinate Zn(2+): Cys143, Cys146, Cys156, and Cys159. A 'KMSKS' region motif is present at residues 375 to 379 (KFSKS). Lys378 is a binding site for ATP. Positions 676–776 (DFAKLDMRVG…KPISLGSKVR (101 aa)) constitute a tRNA-binding domain.

It belongs to the class-I aminoacyl-tRNA synthetase family. MetG type 1 subfamily. In terms of assembly, homodimer. Zn(2+) is required as a cofactor.

Its subcellular location is the cytoplasm. It catalyses the reaction tRNA(Met) + L-methionine + ATP = L-methionyl-tRNA(Met) + AMP + diphosphate. Functionally, is required not only for elongation of protein synthesis but also for the initiation of all mRNA translation through initiator tRNA(fMet) aminoacylation. In Nanoarchaeum equitans (strain Kin4-M), this protein is Methionine--tRNA ligase (metG).